Consider the following 377-residue polypeptide: F-box protein At4g00755 (377 aa).

The region spanning 7–47 (LDTDTSLSILSCLDDPSDIVRASAVSRSWRQFVVKYSLSKN) is the F-box domain.

This is F-box protein At4g00755 from Arabidopsis thaliana (Mouse-ear cress).